A 547-amino-acid chain; its full sequence is MSMFCYQCQEASQGIGCTVRGVCGKTDDVANLQDLLIFTLKGISFLNLKARETGVNKEKTDRFLFEGLFSTITNVNFDRNFFINKIKEAVALREEIKEDLKKAGIEVDESCEAIHWVYDTDEDIEAIAAEVGVLSTKDEDIRSLRELITYGVKGMAAYAYHAYQLGYKDDNIFRFMEKALAKVLDDSLTADDYVALALEAGKYGVDTMALLDKANTSTYGHPEITKVNIGVRNNPGILISGHDLKDLEQLLEQTAGTGVDVYTHGEMLPAHYYPAFKKYPHFVGNYGNAWWQQDREFELFNGPILMTTNCLVPPKDSYKDRVYTTGVVGFEGVKYIPEGPDGKKDFSEIIEHAKRCKPPVEIERGEIIGGFAHNQVLELADKIVEAVKTGAIKRFFVMAGCDGRMKSRTYYTEFAKALPKDTVILTAGCAKYRYNKLNLGDINGIPRVLDAGQCNDSYSLAVIAMKLKEVFGLNDINKLPISYNIAWYEQKAVIVLLALLYLGVKNIHLGPTLPAFLSPNVTKVLVDKFGIGGITNVEDDMKMFMGE.

Cysteine 5, cysteine 8, cysteine 17, and cysteine 23 together coordinate [4Fe-4S] cluster. Positions 242, 266, 310, 401, 429, 454, 489, and 491 each coordinate hybrid [4Fe-2O-2S] cluster. Cysteine 401 carries the cysteine persulfide modification.

This sequence belongs to the HCP family. [4Fe-4S] cluster is required as a cofactor. The cofactor is hybrid [4Fe-2O-2S] cluster.

Its subcellular location is the cytoplasm. The catalysed reaction is A + NH4(+) + H2O = hydroxylamine + AH2 + H(+). Its function is as follows. Catalyzes the reduction of hydroxylamine to form NH(3) and H(2)O. This is Hydroxylamine reductase from Thermoanaerobacter pseudethanolicus (strain ATCC 33223 / 39E) (Clostridium thermohydrosulfuricum).